The sequence spans 330 residues: D-cysteine desulfhydrase (330 aa).

Lys52 carries the N6-(pyridoxal phosphate)lysine modification.

The protein belongs to the ACC deaminase/D-cysteine desulfhydrase family. Homodimer. Requires pyridoxal 5'-phosphate as cofactor.

The catalysed reaction is D-cysteine + H2O = hydrogen sulfide + pyruvate + NH4(+) + H(+). Functionally, catalyzes the alpha,beta-elimination reaction of D-cysteine and of several D-cysteine derivatives. It could be a defense mechanism against D-cysteine. In Serratia proteamaculans (strain 568), this protein is D-cysteine desulfhydrase.